The following is a 900-amino-acid chain: Isoleucine--tRNA ligase (900 aa).

Residues 58–68 carry the 'HIGH' region motif; that stretch reads PYANGDLHTGH. E550 is a binding site for L-isoleucyl-5'-AMP. The 'KMSKS' region signature appears at 591-595; sequence KMSKS. An ATP-binding site is contributed by K594. Zn(2+)-binding residues include C871, C874, C888, and C891.

The protein belongs to the class-I aminoacyl-tRNA synthetase family. IleS type 1 subfamily. Monomer. The cofactor is Zn(2+).

It localises to the cytoplasm. It carries out the reaction tRNA(Ile) + L-isoleucine + ATP = L-isoleucyl-tRNA(Ile) + AMP + diphosphate. Functionally, catalyzes the attachment of isoleucine to tRNA(Ile). As IleRS can inadvertently accommodate and process structurally similar amino acids such as valine, to avoid such errors it has two additional distinct tRNA(Ile)-dependent editing activities. One activity is designated as 'pretransfer' editing and involves the hydrolysis of activated Val-AMP. The other activity is designated 'posttransfer' editing and involves deacylation of mischarged Val-tRNA(Ile). The chain is Isoleucine--tRNA ligase from Malacoplasma penetrans (strain HF-2) (Mycoplasma penetrans).